A 707-amino-acid chain; its full sequence is Serine/threonine protein kinase UL97 (707 aa).

The span at methionine 1–leucine 14 shows a compositional bias: low complexity. 4 disordered regions span residues methionine 1 to arginine 33, aspartate 113 to tyrosine 146, phenylalanine 176 to arginine 198, and glutamate 231 to serine 264. Over residues aspartate 113 to arginine 127 the composition is skewed to basic and acidic residues. Residues glycine 178 to glycine 188 show a composition bias toward low complexity. Residues leucine 337–valine 345 and lysine 359 each bind ATP. Aspartate 456 acts as the Proton acceptor in catalysis.

The protein belongs to the protein kinase superfamily. Tyr protein kinase family. HCMV ganciclovir subfamily. Interacts with UL83. In terms of processing, autophosphorylates on serine and threonine residues.

The protein localises to the virion. The enzyme catalyses L-seryl-[protein] + ATP = O-phospho-L-seryl-[protein] + ADP + H(+). It catalyses the reaction L-threonyl-[protein] + ATP = O-phospho-L-threonyl-[protein] + ADP + H(+). Serine/threonine protein kinase that plays important roles in several processes including nuclear viral egress, viral replication or regulation of host cell cycle progression. Participates in the acquisition of tegument during virion morphogenesis in the nucleus. Phosphorylates the viral nuclear egress complex (NEC) subunits UL50 and UL53. Redistributes the host nuclear lamina by phosphorylating cellular Lamins-A/C. Plays a role in viral DNA synthesis by phosphorylating the DNA polymerase processivity factor UL44. Stimulates host cell cycle to support viral DNA synthesis by phosphorylating host retinoblastoma/RB1 protein. Additional substrates have been identified including host EF1D or H2B. Also phosphorylates host SAMHD1 and thereby counteracts its antiviral effect by reducing its dNTP hydrolase activity. In Human cytomegalovirus (strain AD169) (HHV-5), this protein is Serine/threonine protein kinase UL97 (UL97).